The following is a 165-amino-acid chain: Transcription factor TCP16 (165 aa).

A compositionally biased stretch (polar residues) spans 1 to 11; sequence MDSKNGINNSQ. 2 disordered regions span residues 1–21 and 146–165; these read MDSKNGINNSQKARRTPKDRH and GNATASDTTSAATTTATTTV. Residues 12 to 21 are compositionally biased toward basic residues; that stretch reads KARRTPKDRH. A TCP domain is found at 17 to 71; it reads PKDRHLKIGGRDRRIRIPPSVAPQLFRLTKELGFKTDGETVSWLLQNAEPAIFAA. Positions 148 to 165 are enriched in low complexity; it reads ATASDTTSAATTTATTTV.

As to expression, mostly in anther in young buds.

It localises to the nucleus. In terms of biological role, required during early processes in pollen development. The sequence is that of Transcription factor TCP16 (TCP16) from Arabidopsis thaliana (Mouse-ear cress).